We begin with the raw amino-acid sequence, 103 residues long: Large ribosomal subunit protein uL23 (103 aa).

The protein belongs to the universal ribosomal protein uL23 family. As to quaternary structure, part of the 50S ribosomal subunit. Contacts protein L29, and trigger factor when it is bound to the ribosome.

One of the early assembly proteins it binds 23S rRNA. One of the proteins that surrounds the polypeptide exit tunnel on the outside of the ribosome. Forms the main docking site for trigger factor binding to the ribosome. The chain is Large ribosomal subunit protein uL23 from Pelodictyon phaeoclathratiforme (strain DSM 5477 / BU-1).